Reading from the N-terminus, the 1804-residue chain is Obscurin-like protein 1 (1804 aa).

A Phosphoserine modification is found at Ser10. Ig-like domains are found at residues 12 to 100 (PCFL…AAVT), 128 to 225 (PKFL…ALLQ), 241 to 330 (PKPV…QTLS), and 339 to 425 (PRLR…ANVT). The interaction with TTN stretch occupies residues 17 to 19 (FPR). Residues Cys33 and Cys84 are joined by a disulfide bond. The interaction with TTN stretch occupies residues 85–94 (RARNAAGEAY). Cysteines 149 and 209 form a disulfide. The tract at residues 227–249 (HQPRESPPQDPDENPKPVLEPLK) is disordered. Cystine bridges form between Cys267–Cys319 and Cys362–Cys412. The region spanning 517-615 (PPGPPVMVEM…FNGSAHLVPT (99 aa)) is the Fibronectin type-III domain. 10 consecutive Ig-like domains span residues 720–800 (PQDK…FGVT), 804–891 (PPVH…FTVT), 902–982 (PSSE…FTIT), 986–1075 (PPVR…VTVT), 1078–1165 (PERI…FNVS), 1176–1261 (PEAA…FNVQ), 1266–1442 (PPVK…ARLS), 1536–1621 (PVTI…ARLT), 1625–1694 (REVS…EDTG), and 1702–1798 (PAQS…ADTQ). 8 cysteine pairs are disulfide-bonded: Cys738-Cys788, Cys829-Cys879, Cys920-Cys970, Cys1011-Cys1061, Cys1103-Cys1153, Cys1195-Cys1245, Cys1289-Cys1430, and Cys1558-Cys1608.

As to quaternary structure, component of the 3M complex, composed of core components CUL7, CCDC8 and OBSL1. Interacts with CCDC8. Interacts with CUL7; the interaction is direct. Interacts with FBXW8. Interacts (via N-terminal Ig-like domain) with TTN/titin (via C-terminal Ig-like domain); the interaction is direct.

The protein localises to the cytoplasm. It localises to the perinuclear region. The protein resides in the golgi apparatus. Its function is as follows. Core component of the 3M complex, a complex required to regulate microtubule dynamics and genome integrity. It is unclear how the 3M complex regulates microtubules, it could act by controlling the level of a microtubule stabilizer. Acts as a regulator of the Cul7-RING(FBXW8) ubiquitin-protein ligase, playing a critical role in the ubiquitin ligase pathway that regulates Golgi morphogenesis and dendrite patterning in brain. Required to localize CUL7 to the Golgi apparatus in neurons. This is Obscurin-like protein 1 (Obsl1) from Mus musculus (Mouse).